Here is a 386-residue protein sequence, read N- to C-terminus: Patatin-15 (386 aa).

The N-terminal stretch at 1–23 is a signal peptide; it reads MATTKSFLILFFMILATTSSTCA. The PNPLA domain occupies 32–229; the sequence is LSIDGGGIKG…TVGDPALLSL (198 aa). The short motif at 36–41 is the GXGXXG element; it reads GGGIKG. Residues 75–79 carry the GXSXG motif; the sequence is GTSTG. The Nucleophile role is filled by Ser-77. Residue Asn-115 is glycosylated (N-linked (GlcNAc...) asparagine). Asp-215 (proton acceptor) is an active-site residue. Residues 215–217 carry the DGA/G motif; the sequence is DGG. A coiled-coil region spans residues 321 to 384; that stretch reads ENALTGTTTE…DRKKLRANKA (64 aa).

This sequence belongs to the patatin family. As to expression, tuber.

The protein localises to the vacuole. Probable lipolytic acyl hydrolase (LAH), an activity which is thought to be involved in the response of tubers to pathogens. The protein is Patatin-15 of Solanum tuberosum (Potato).